A 228-amino-acid chain; its full sequence is L-ribulose-5-phosphate 4-epimerase UlaF (228 aa).

Substrate-binding positions include 26–27 (GN), 43–44 (SG), and 72–73 (SS). Zn(2+) contacts are provided by Asp-74, His-93, and His-95. Asp-118 serves as the catalytic Proton donor/acceptor. His-167 is a binding site for Zn(2+). Residue Tyr-225 is the Proton donor/acceptor of the active site.

Belongs to the aldolase class II family. AraD/FucA subfamily. It depends on Zn(2+) as a cofactor.

It carries out the reaction L-ribulose 5-phosphate = D-xylulose 5-phosphate. It participates in cofactor degradation; L-ascorbate degradation; D-xylulose 5-phosphate from L-ascorbate: step 4/4. Its function is as follows. Catalyzes the isomerization of L-ribulose 5-phosphate to D-xylulose 5-phosphate. Is involved in the anaerobic L-ascorbate utilization. In Escherichia coli O17:K52:H18 (strain UMN026 / ExPEC), this protein is L-ribulose-5-phosphate 4-epimerase UlaF.